Here is a 1057-residue protein sequence, read N- to C-terminus: MELWVPQTQGRTTGPSRDANRRLQSGHYRPRPHPQYSGDNYHQWQDTHKNSKPQQDPRDDHQQPHYVPRSGEWSQPVSGADYLKGSYPSHPYSRSGYEDPYQSYHTPTPRDEYAYGNYYYHGHPQLPQGERVARQGSPYIWHEDHRDQRHFSEHHWEKHNSTFEANSDTQFQFTSKNPYNDNPASAFGLEQPGEFFPESGAQKQKPSLTSKSNLLQQHESGLSSSSYELSQYMTEAPEQYEPMVSATWRPIQADDTSATVPKAPMRFYVPHVSVSFGPGGQLICVSPNSPADGQTALVEVHSMEVILNDFEDQEEMRAFPGPLIREDIHKVDIMTFCQKKAAQCLKSETPGSRDSALLWQLLVLLCRQNGSMVGSDIAELLMQDCKKLEKYKRQPPVANLINLTDEDWPVLSSGTRNLLTGEIPLNVDTPAQIVEKFTNLLYYGRKKEALEWAMKNHLWGHALFLASKMDPRTYNWVMSGFTTTLALNDPLQTLFQLMSGRIPQAATCCGDKQWGDWRPHLAVILSNQAGDAELYQRAIVSMGDTLAGKGLVEASHFCYLMAHVPFGHYTVKTDHLALVGSNHSQEFLKFATIEAIQRTEIFEYCQMLGRPKSFIPSFQVYKLLYASRLADYGLASQALHYCEAIGAAVLSEGGSSHPVLLAELIKLAEKLKLSDPLVLESRRGDRVLEPDWLVQLRRKHKELEQTRTGDLRDPDLTPSDIYGARGTTDTPYRDLYGQQNYSEDSEYSSALWPTSEQTSLTNPTPQQPFPLQRDTYSERDGPVHMGTPVPLYSVPATHLTVISGSSSGSGVAVTGAPGGRVGEEMLQKHPALGENTVPQEAVQDPDGLAVISSPQTPLAPRDRSFSEDSAISAKEDEEGTSDGADKPPHPDASQKEKLRDGKNTKSSGFGWFSWFRSKPASSVSTSGDEDSVDSSDSEESPRASPPHHASLGLSPTPPLSSPSLPGASTFPRGTGGNSLQGSSNSSGMAEGVGIGGFSGPQGVSSEFYSQPGALPPPPTLQGAVPLYNPSQVPQLPTASSLNRPNRLAQRRYPSQPC.

Over residues 1 to 15 the composition is skewed to polar residues; sequence MELWVPQTQGRTTGP. A disordered region spans residues 1 to 86; that stretch reads MELWVPQTQG…VSGADYLKGS (86 aa). The segment covering 45–63 has biased composition (basic and acidic residues); the sequence is QDTHKNSKPQQDPRDDHQQ. Phosphoserine occurs at positions 70, 137, 161, and 185. The segment at 185-220 is disordered; the sequence is SAFGLEQPGEFFPESGAQKQKPSLTSKSNLLQQHES. Polar residues predominate over residues 201 to 213; that stretch reads AQKQKPSLTSKSN. At S245 the chain carries Phosphoserine. The central conserved domain (CCD); required for localization to endoplasmic reticulum exit sites stretch occupies residues 263 to 708; sequence APMRFYVPHV…KHKELEQTRT (446 aa). The span at 704–715 shows a compositional bias: basic and acidic residues; that stretch reads EQTRTGDLRDPD. Disordered regions lie at residues 704-778 and 849-1057; these read EQTR…TYSE and AVIS…SQPC. A compositionally biased stretch (polar residues) spans 737–764; it reads GQQNYSEDSEYSSALWPTSEQTSLTNPT. T856 bears the Phosphothreonine mark. Phosphoserine occurs at positions 866, 869, 872, and 881. The span at 883–903 shows a compositional bias: basic and acidic residues; that stretch reads GADKPPHPDASQKEKLRDGKN. A compositionally biased stretch (low complexity) spans 906–926; the sequence is SSGFGWFSWFRSKPASSVSTS. Positions 927–938 are enriched in acidic residues; it reads GDEDSVDSSDSE. The span at 990–999 shows a compositional bias: gly residues; sequence EGVGIGGFSG. Over residues 1028 to 1043 the composition is skewed to polar residues; sequence NPSQVPQLPTASSLNR.

This sequence belongs to the SEC16 family. In terms of assembly, SEC16A and SEC16B are each present in multiple copies in a heteromeric complex. Interacts with TFG. Interacts with SEC13. As to expression, liver, kidney, heart, spleen and brain.

Its subcellular location is the endoplasmic reticulum membrane. The protein resides in the golgi apparatus membrane. In terms of biological role, plays a role in the organization of the endoplasmic reticulum exit sites (ERES), also known as transitional endoplasmic reticulum (tER). Required for secretory cargo traffic from the endoplasmic reticulum to the Golgi apparatus. Involved in peroxisome biogenesis. Regulates the transport of peroxisomal biogenesis factors PEX3 and PEX16 from the ER to peroxisomes. The protein is Protein transport protein Sec16B (Sec16b) of Rattus norvegicus (Rat).